A 563-amino-acid polypeptide reads, in one-letter code: Putative inactive polypeptide N-acetylgalactosaminyltransferase 12 (563 aa).

Residues 1-6 (MEVFAS) are Cytoplasmic-facing. The helical; Signal-anchor for type II membrane protein transmembrane segment at 7–29 (VLNCCFKYIVLPVWIFIVLLLLH) threads the bilayer. The Lumenal segment spans residues 30-563 (RDLSSWDGLM…SVMQSANILV (534 aa)). N-linked (GlcNAc...) asparagine glycosylation is present at asparagine 50. Residues cysteine 97 and cysteine 334 are joined by a disulfide bond. The interval 109–225 (MKPASIIMIF…NGWLSPLLDT (117 aa)) is catalytic subdomain A. Residues 280 to 342 (PYEVAAVRTS…PCSRVGHLQP (63 aa)) are catalytic subdomain B. 2 N-linked (GlcNAc...) asparagine glycosylation sites follow: asparagine 389 and asparagine 428. The Ricin B-type lectin domain maps to 433–549 (ASGHVKTLEF…ANGKQRWILD (117 aa)). Cysteine 446 and cysteine 461 are joined by a disulfide. 2 N-linked (GlcNAc...) asparagine glycosylation sites follow: asparagine 464 and asparagine 469. 2 disulfide bridges follow: cysteine 485-cysteine 499 and cysteine 523-cysteine 537. Asparagine 552 carries an N-linked (GlcNAc...) asparagine glycan.

It belongs to the glycosyltransferase 2 family. GalNAc-T subfamily.

It localises to the golgi apparatus membrane. Probable inactive glycosyltransferase. This chain is Putative inactive polypeptide N-acetylgalactosaminyltransferase 12 (pgant12), found in Drosophila melanogaster (Fruit fly).